The sequence spans 199 residues: GTP cyclohydrolase 1 (199 aa).

Cys-89, His-92, and Cys-161 together coordinate Zn(2+).

Belongs to the GTP cyclohydrolase I family. Homomer.

It carries out the reaction GTP + H2O = 7,8-dihydroneopterin 3'-triphosphate + formate + H(+). The protein operates within cofactor biosynthesis; 7,8-dihydroneopterin triphosphate biosynthesis; 7,8-dihydroneopterin triphosphate from GTP: step 1/1. In Bifidobacterium longum (strain DJO10A), this protein is GTP cyclohydrolase 1.